The sequence spans 387 residues: MYCIGLISGTSVDGIDACLVDISGSGLDLKVDLLRGETYPYPDALRQEILALCAGTPVSPEAIAFLDDSIAKEFAQAAQQIQQSLPPADLIGSHGQTIFHRPPNPEKAFSLGYSWQLGRGEAIANLTGITTVSNFRAADIAAGGQGAPLVSKIDVCLLSHQNEHRCVQNLGGIGNVTYLPPRSQTNWQEKICGWDTGPANVLVDLAVQKFTQGEKTYDQGGQWAAQGKPRQELVDQWLQEPFFEQYPPKSTGRELFGALYLDNCWIEAQRHGLNETDFLTTLTEFTARSVVTEYQRFLPQLPDRLLLCGGGAHNLYLRERLQYHLGSNTKIQRTDDVGLNSDFKEAIAFAVLAYWRFQEQFPGNVPLVTGASQDCLLGDIHLVPVGS.

Residue 9–16 (GTSVDGID) participates in ATP binding.

The protein belongs to the anhydro-N-acetylmuramic acid kinase family.

The enzyme catalyses 1,6-anhydro-N-acetyl-beta-muramate + ATP + H2O = N-acetyl-D-muramate 6-phosphate + ADP + H(+). Its pathway is amino-sugar metabolism; 1,6-anhydro-N-acetylmuramate degradation. It functions in the pathway cell wall biogenesis; peptidoglycan recycling. In terms of biological role, catalyzes the specific phosphorylation of 1,6-anhydro-N-acetylmuramic acid (anhMurNAc) with the simultaneous cleavage of the 1,6-anhydro ring, generating MurNAc-6-P. Is required for the utilization of anhMurNAc either imported from the medium or derived from its own cell wall murein, and thus plays a role in cell wall recycling. The chain is Anhydro-N-acetylmuramic acid kinase from Synechocystis sp. (strain ATCC 27184 / PCC 6803 / Kazusa).